We begin with the raw amino-acid sequence, 106 residues long: uncharacterized protein (106 aa).

Positions 54–106 are disordered; it reads RSTLVATSPRRRSLVQQRRPPLREQNGGSGSSCVSSGGSASTVKTPGSRRASK. Positions 84 to 94 are enriched in low complexity; that stretch reads SSCVSSGGSAS.

This is an uncharacterized protein from Human adenovirus C serotype 2 (HAdV-2).